Consider the following 2055-residue polypeptide: Citron rho-interacting kinase (2055 aa).

The region spanning 97–359 (FEVRSLVGCG…FEGLCCHPFF (263 aa)) is the Protein kinase domain. ATP-binding positions include 103–111 (VGCGHFAEV) and Lys126. Asp221 acts as the Proton acceptor in catalysis. The AGC-kinase C-terminal domain occupies 360–430 (ARTDWNNIRN…SKALGYLGRS (71 aa)). Residues 375–398 (VPTLKSDDDTSNFDEPEKNSWVSS) are disordered. Coiled-coil stretches lie at residues 457-747 (LQDS…AQVS), 773-1238 (IKKD…LEYQ), and 1284-1318 (YNEL…AREE). The disordered stretch occupies residues 1349–1376 (PEHQPSAMSLLAPPSSRRKEASTPEEFS). The span at 1353–1363 (PSAMSLLAPPS) shows a compositional bias: low complexity. Over residues 1365–1376 (RRKEASTPEEFS) the composition is skewed to basic and acidic residues. The Phorbol-ester/DAG-type zinc finger occupies 1388-1437 (PHRFNVGLNMRATKCAVCLDTVHFGRQASKCLECQVMCHPKCSTCLPATC). The PH domain maps to 1469–1589 (SLHLEGWMKV…WVTALESVVA (121 aa)). A CNH domain is found at 1617 to 1907 (RLDMNCTLPF…RYLGPAISSG (291 aa)). Positions 1932 to 2040 (SGTEQHRVPS…RGRLPAGAVR (109 aa)) are disordered. Over residues 1939–1948 (VPSTSRSSPN) the composition is skewed to polar residues. Over residues 1974 to 2031 (SHPREPSTPHRYRDREGRTELRRDKSPGRPLEREKSPGRMLSTRRERSPGRLFEDSSR) the composition is skewed to basic and acidic residues.

This sequence belongs to the protein kinase superfamily. AGC Ser/Thr protein kinase family. As to quaternary structure, homodimer. Directly interacts with KIF14 depending on the activation state (stronger interaction with the kinase-dead form). Interacts with TTC3.

It is found in the cytoplasm. It carries out the reaction L-seryl-[protein] + ATP = O-phospho-L-seryl-[protein] + ADP + H(+). It catalyses the reaction L-threonyl-[protein] + ATP = O-phospho-L-threonyl-[protein] + ADP + H(+). In terms of biological role, plays a role in cytokinesis. Required for KIF14 localization to the central spindle and midbody. Putative RHO/RAC effector that binds to the GTP-bound forms of RHO and RAC1. It probably binds p21 with a tighter specificity in vivo. Displays serine/threonine protein kinase activity. Plays an important role in the regulation of cytokinesis and the development of the central nervous system. Phosphorylates MYL9/MLC2. This Rattus norvegicus (Rat) protein is Citron rho-interacting kinase.